Reading from the N-terminus, the 647-residue chain is Phosphatidylinositol polyphosphate 5-phosphatase type IV (647 aa).

Disordered stretches follow at residues 1 to 80 (MPSK…QPPI), 101 to 131 (RGSQ…PAYS), and 177 to 196 (HRDA…HASH). Residues 52–55 (PMPP) form repeat 1. The interval 52 to 243 (PMPPFSIPAK…AHSNLGPSRP (192 aa)) is 3 X 4 AA repeats of P-X-X-P. Positions 60–75 (AKTSNQNPQTKANLIT) are enriched in polar residues. Repeat unit 2 spans residues 76–79 (PQPP). Serine 103 carries the phosphoserine modification. Residues 120 to 129 (LQDSVAQSPA) show a composition bias toward polar residues. Threonine 197 carries the post-translational modification Phosphothreonine. Repeat unit 3 spans residues 240–243 (PSRP). A phosphoserine mark is found at serine 245 and serine 259. A Cysteine methyl ester modification is found at cysteine 644. Residue cysteine 644 is the site of S-farnesyl cysteine attachment. The propeptide at 645–647 (TVS) is removed in mature form.

This sequence belongs to the inositol polyphosphate 5-phosphatase family. Interacts (when prenylated) with PDE6D; this is important for normal location in cilia. Highly expressed in testis, in pachytene and diplotene spermatocytes, but not in more mature elongating spermatids. Detected in neurons throughout the brain.

It localises to the cytoplasm. Its subcellular location is the cytoskeleton. It is found in the cilium axoneme. The protein resides in the golgi apparatus. The protein localises to the golgi stack membrane. It localises to the cell projection. Its subcellular location is the ruffle. It is found in the cell membrane. The protein resides in the nucleus. It catalyses the reaction a 1,2-diacyl-sn-glycero-3-phospho-(1D-myo-inositol-4,5-bisphosphate) + H2O = a 1,2-diacyl-sn-glycero-3-phospho-(1D-myo-inositol 4-phosphate) + phosphate. It carries out the reaction a 1,2-diacyl-sn-glycero-3-phospho-(1D-myo-inositol-3,4,5-trisphosphate) + H2O = a 1,2-diacyl-sn-glycero-3-phospho-(1D-myo-inositol-3,4-bisphosphate) + phosphate. The enzyme catalyses a 1,2-diacyl-sn-glycero-3-phospho-(1D-myo-inositol-3,5-bisphosphate) + H2O = a 1,2-diacyl-sn-glycero-3-phospho-(1D-myo-inositol-3-phosphate) + phosphate. Its function is as follows. Phosphatidylinositol (PtdIns) phosphatase that specifically hydrolyzes the 5-phosphate of phosphatidylinositol-3,4,5-trisphosphate (PtdIns(3,4,5)P3), phosphatidylinositol 4,5-bisphosphate (PtdIns(4,5)P2) and phosphatidylinositol 3,5-bisphosphate (PtdIns(3,5)P2). Specific for lipid substrates, inactive towards water soluble inositol phosphates. Specific for lipid substrates, inactive towards water soluble inositol phosphates. Plays an essential role in the primary cilium by controlling ciliary growth and phosphoinositide 3-kinase (PI3K) signaling and stability. This is Phosphatidylinositol polyphosphate 5-phosphatase type IV (Inpp5e) from Mus musculus (Mouse).